Here is a 386-residue protein sequence, read N- to C-terminus: Ferredoxin--NADP reductase (386 aa).

Residues 9–67 (SRMFRYEVVGLRQTAETEKTNYAIRNSGSQFFNVPYDRMNQFMQQITRWGGKIVSIQPL) form the CpcD-like domain. The FAD-binding FR-type domain occupies 104 to 228 (NNPCIGKVIS…TGPVGKEMLL (125 aa)). FAD-binding positions include 163–166 (RLYS), 184–186 (CVR), Tyr190, 202–204 (VCS), and Thr243. Residues Ser166 and Arg186 each contribute to the NADP(+) site. NADP(+) contacts are provided by residues Thr243, 275–276 (VA), 305–306 (SR), 315–319 (KMYIQ), 344–345 (GL), and Glu384.

It belongs to the ferredoxin--NADP reductase type 1 family. FAD serves as cofactor.

It localises to the cellular thylakoid membrane. It catalyses the reaction 2 reduced [2Fe-2S]-[ferredoxin] + NADP(+) + H(+) = 2 oxidized [2Fe-2S]-[ferredoxin] + NADPH. In Thermosynechococcus vestitus (strain NIES-2133 / IAM M-273 / BP-1), this protein is Ferredoxin--NADP reductase (petH).